A 262-amino-acid chain; its full sequence is Hydroxyethylthiazole kinase (262 aa).

M50 is a substrate binding site. Residues R125 and T171 each coordinate ATP. G198 serves as a coordination point for substrate.

This sequence belongs to the Thz kinase family. Requires Mg(2+) as cofactor.

The enzyme catalyses 5-(2-hydroxyethyl)-4-methylthiazole + ATP = 4-methyl-5-(2-phosphooxyethyl)-thiazole + ADP + H(+). It functions in the pathway cofactor biosynthesis; thiamine diphosphate biosynthesis; 4-methyl-5-(2-phosphoethyl)-thiazole from 5-(2-hydroxyethyl)-4-methylthiazole: step 1/1. Its function is as follows. Catalyzes the phosphorylation of the hydroxyl group of 4-methyl-5-beta-hydroxyethylthiazole (THZ). The chain is Hydroxyethylthiazole kinase from Escherichia coli O81 (strain ED1a).